The chain runs to 348 residues: Phenylalanine--tRNA ligase alpha subunit (348 aa).

Mg(2+) is bound at residue Glu-259.

Belongs to the class-II aminoacyl-tRNA synthetase family. Phe-tRNA synthetase alpha subunit type 1 subfamily. In terms of assembly, tetramer of two alpha and two beta subunits. Requires Mg(2+) as cofactor.

Its subcellular location is the cytoplasm. It catalyses the reaction tRNA(Phe) + L-phenylalanine + ATP = L-phenylalanyl-tRNA(Phe) + AMP + diphosphate + H(+). The protein is Phenylalanine--tRNA ligase alpha subunit of Lactiplantibacillus plantarum (strain ATCC BAA-793 / NCIMB 8826 / WCFS1) (Lactobacillus plantarum).